The primary structure comprises 900 residues: Nitrate reductase [NADH] (900 aa).

Cys172 provides a ligand contact to Mo-molybdopterin. The Cytochrome b5 heme-binding domain occupies 521–596 (TKMYSLSEVK…LEDYRVGELI (76 aa)). The heme site is built by His556 and His579. The FAD-binding FR-type domain maps to 644-756 (REKIPCKLIS…KGPLGHIEYT (113 aa)). FAD-binding positions include 696–699 (RAYT), 713–717 (VVKVY), Phe718, Phe725, 730–732 (AMS), and Thr783.

This sequence belongs to the nitrate reductase family. As to quaternary structure, homodimer. FAD serves as cofactor. It depends on heme as a cofactor. Mo-molybdopterin is required as a cofactor.

It carries out the reaction nitrite + NAD(+) + H2O = nitrate + NADH + H(+). Nitrate reductase is a key enzyme involved in the first step of nitrate assimilation in plants, fungi and bacteria. The protein is Nitrate reductase [NADH] (NIA) of Lotus japonicus (Lotus corniculatus var. japonicus).